Reading from the N-terminus, the 433-residue chain is Pyrimidine-nucleoside phosphorylase (433 aa).

81 to 83 contributes to the phosphate binding site; sequence KHS. Residues glycine 88 and threonine 90 each contribute to the K(+) site. Residues threonine 92, 108–110, and threonine 120 contribute to the phosphate site; that span reads KMS. Positions 168 and 187 each coordinate substrate. K(+) is bound by residues leucine 243, alanine 246, and glutamate 255.

It belongs to the thymidine/pyrimidine-nucleoside phosphorylase family. In terms of assembly, homodimer. K(+) serves as cofactor.

The catalysed reaction is uridine + phosphate = alpha-D-ribose 1-phosphate + uracil. It catalyses the reaction thymidine + phosphate = 2-deoxy-alpha-D-ribose 1-phosphate + thymine. It carries out the reaction 2'-deoxyuridine + phosphate = 2-deoxy-alpha-D-ribose 1-phosphate + uracil. Its function is as follows. Catalyzes phosphorolysis of the pyrimidine nucleosides uridine, thymidine and 2'-deoxyuridine with the formation of the corresponding pyrimidine base and ribose-1-phosphate. This is Pyrimidine-nucleoside phosphorylase from Bacillus subtilis (strain 168).